The primary structure comprises 256 residues: Ribonuclease HII (256 aa).

Residues 72-256 form the RNase H type-2 domain; the sequence is QYIAGMDEVG…SFNPVPKYLN (185 aa). 3 residues coordinate a divalent metal cation: Asp78, Glu79, and Asp170.

The protein belongs to the RNase HII family. The cofactor is Mn(2+). Mg(2+) serves as cofactor.

Its subcellular location is the cytoplasm. The catalysed reaction is Endonucleolytic cleavage to 5'-phosphomonoester.. In terms of biological role, endonuclease that specifically degrades the RNA of RNA-DNA hybrids. The chain is Ribonuclease HII from Limosilactobacillus reuteri (strain DSM 20016) (Lactobacillus reuteri).